Here is a 163-residue protein sequence, read N- to C-terminus: Protein-export protein SecB (163 aa).

This sequence belongs to the SecB family. As to quaternary structure, homotetramer, a dimer of dimers. One homotetramer interacts with 1 SecA dimer.

The protein localises to the cytoplasm. Its function is as follows. One of the proteins required for the normal export of preproteins out of the cell cytoplasm. It is a molecular chaperone that binds to a subset of precursor proteins, maintaining them in a translocation-competent state. It also specifically binds to its receptor SecA. In Brucella abortus (strain S19), this protein is Protein-export protein SecB.